The primary structure comprises 799 residues: Protein translocase subunit SecA (799 aa).

Residues Q85, 103–107 (GEGKT), and D504 contribute to the ATP site.

This sequence belongs to the SecA family. Monomer and homodimer. Part of the essential Sec protein translocation apparatus which comprises SecA, SecYEG and auxiliary proteins SecDF. Other proteins may also be involved.

It localises to the cell membrane. It is found in the cytoplasm. The catalysed reaction is ATP + H2O + cellular proteinSide 1 = ADP + phosphate + cellular proteinSide 2.. In terms of biological role, part of the Sec protein translocase complex. Interacts with the SecYEG preprotein conducting channel. Has a central role in coupling the hydrolysis of ATP to the transfer of proteins into and across the cell membrane, serving as an ATP-driven molecular motor driving the stepwise translocation of polypeptide chains across the membrane. The sequence is that of Protein translocase subunit SecA from Lactobacillus gasseri (strain ATCC 33323 / DSM 20243 / BCRC 14619 / CIP 102991 / JCM 1131 / KCTC 3163 / NCIMB 11718 / NCTC 13722 / AM63).